The primary structure comprises 224 residues: Ribonuclease T (224 aa).

An Exonuclease domain is found at 32–206 (VVVDVETGGF…YDTEKTAELF (175 aa)). Aspartate 35, glutamate 37, histidine 193, and aspartate 198 together coordinate Mg(2+). The Proton donor/acceptor role is filled by histidine 193.

The protein belongs to the RNase T family. Homodimer. The cofactor is Mg(2+).

Trims short 3' overhangs of a variety of RNA species, leaving a one or two nucleotide 3' overhang. Responsible for the end-turnover of tRNA: specifically removes the terminal AMP residue from uncharged tRNA (tRNA-C-C-A). Also appears to be involved in tRNA biosynthesis. In Pseudomonas paraeruginosa (strain DSM 24068 / PA7) (Pseudomonas aeruginosa (strain PA7)), this protein is Ribonuclease T.